Reading from the N-terminus, the 545-residue chain is MSDLYDLGTGEKRPFWADAAADEVEARDPDEPVTIKGGVSPSGVPHLGHFNEIMRGYFVAEALRERGYEVRQVFTTDDKDRLRKLPRKLADLDWNVVGLGEVDAGALGRNLGRPYTDIPDPFGCCDSYGAHFTELLRRSAEAIGVPIDLVSNTELYAGGDFDAAVEDALANRDTAREVLSEFQDKVDDEYVPFFPQCAECGLLTETVTDIDLDDGTVGYVCSDVEAGDDVIEGCGHEGRATFRAGKLPWRFEWPAQWRVLGVDFEPFGKDHAEGSWPSGKAVSREVFDTEPPVPMVYEWFTLNGDALSSSAGNIITVDEVLELLEPAVLRYFFTKNPKKQRDFDVSNLDRFVDEFDRFEAGYFGDESVEDDERARADRAYPMVVDELPERQPVRIPYTFAAVLGMTDDRDLRLQMAQRSGHIPDDATDDQIERALERVEKARAWAVRTDNEFNYRLAETLPAVDFDAETAAALDELAAFVETESPDDETLQGEIYETAKRNDVDVGDLFSAGYRLFLDESEGPRLGPLLSAMDETFVVERLRREG.

The 'HIGH' region motif lies at 41–49 (PSGVPHLGH). Positions 306–310 (ALSSS) match the 'KMSKS' region motif.

It belongs to the class-I aminoacyl-tRNA synthetase family.

It is found in the cytoplasm. The enzyme catalyses tRNA(Lys) + L-lysine + ATP = L-lysyl-tRNA(Lys) + AMP + diphosphate. The protein is Lysine--tRNA ligase of Natronomonas pharaonis (strain ATCC 35678 / DSM 2160 / CIP 103997 / JCM 8858 / NBRC 14720 / NCIMB 2260 / Gabara) (Halobacterium pharaonis).